A 492-amino-acid chain; its full sequence is Adenosylhomocysteinase (492 aa).

Substrate-binding residues include T68, D153, and E215. 216-218 (TTT) provides a ligand contact to NAD(+). K245 and D249 together coordinate substrate. NAD(+)-binding positions include N250, 279 to 284 (GYGDVG), E302, N337, 358 to 360 (IGH), and N406.

The protein belongs to the adenosylhomocysteinase family. Requires NAD(+) as cofactor.

Its subcellular location is the cytoplasm. The catalysed reaction is S-adenosyl-L-homocysteine + H2O = L-homocysteine + adenosine. It functions in the pathway amino-acid biosynthesis; L-homocysteine biosynthesis; L-homocysteine from S-adenosyl-L-homocysteine: step 1/1. Functionally, may play a key role in the regulation of the intracellular concentration of adenosylhomocysteine. This chain is Adenosylhomocysteinase, found in Mycobacterium ulcerans (strain Agy99).